Consider the following 393-residue polypeptide: Elongation factor Tu (393 aa).

The region spanning 10 to 203 (KPHVNIGTIG…AVDNYIPTPV (194 aa)) is the tr-type G domain. The interval 19 to 26 (GHVDHGKT) is G1. 19–26 (GHVDHGKT) contacts GTP. Threonine 26 provides a ligand contact to Mg(2+). The interval 60–64 (GITIS) is G2. A G3 region spans residues 81-84 (DCPG). Residues 81–85 (DCPGH) and 136–139 (NKVD) contribute to the GTP site. A G4 region spans residues 136 to 139 (NKVD). The segment at 173–175 (SAL) is G5.

The protein belongs to the TRAFAC class translation factor GTPase superfamily. Classic translation factor GTPase family. EF-Tu/EF-1A subfamily. As to quaternary structure, monomer.

The protein resides in the cytoplasm. The enzyme catalyses GTP + H2O = GDP + phosphate + H(+). In terms of biological role, GTP hydrolase that promotes the GTP-dependent binding of aminoacyl-tRNA to the A-site of ribosomes during protein biosynthesis. The polypeptide is Elongation factor Tu (Chloroherpeton thalassium (strain ATCC 35110 / GB-78)).